We begin with the raw amino-acid sequence, 320 residues long: Malate dehydrogenase (320 aa).

NAD(+)-binding positions include 10 to 15 (GAGMIG) and Asp34. Substrate is bound by residues Arg83 and Arg89. NAD(+) is bound by residues Asn96 and 119–121 (ITN). Residues Asn121 and Arg152 each coordinate substrate. Residue His176 is the Proton acceptor of the active site.

It belongs to the LDH/MDH superfamily. MDH type 3 family.

The catalysed reaction is (S)-malate + NAD(+) = oxaloacetate + NADH + H(+). Its function is as follows. Catalyzes the reversible oxidation of malate to oxaloacetate. This chain is Malate dehydrogenase, found in Caulobacter sp. (strain K31).